A 122-amino-acid chain; its full sequence is Ribosome-binding factor A (122 aa).

Belongs to the RbfA family. Monomer. Binds 30S ribosomal subunits, but not 50S ribosomal subunits or 70S ribosomes.

The protein resides in the cytoplasm. Its function is as follows. One of several proteins that assist in the late maturation steps of the functional core of the 30S ribosomal subunit. Associates with free 30S ribosomal subunits (but not with 30S subunits that are part of 70S ribosomes or polysomes). Required for efficient processing of 16S rRNA. May interact with the 5'-terminal helix region of 16S rRNA. The polypeptide is Ribosome-binding factor A (Prosthecochloris aestuarii (strain DSM 271 / SK 413)).